We begin with the raw amino-acid sequence, 324 residues long: Adenosine kinase (324 aa).

Substrate is bound by residues S8, D12, S36, G48, N52, F102, F116, and 172–173 (QQ). Residues N195, 223–228 (TLGPKG), and G256 contribute to the ATP site. Residue D257 participates in substrate binding. D257 functions as the Proton acceptor in the catalytic mechanism.

The protein belongs to the carbohydrate kinase PfkB family. Homodimer. Requires Mg(2+) as cofactor.

It catalyses the reaction adenosine + ATP = AMP + ADP + H(+). It carries out the reaction adenosine + GTP = GDP + AMP + H(+). The enzyme catalyses dGTP + adenosine = dGDP + AMP + H(+). It functions in the pathway purine metabolism; AMP biosynthesis via salvage pathway; AMP from adenosine: step 1/1. Its function is as follows. Catalyzes the phosphorylation of adenosine to adenosine monophosphate (AMP). Prefers dGTP and GTP to ATP as phosphate donors in vitro. In Mycobacterium bovis (strain ATCC BAA-935 / AF2122/97), this protein is Adenosine kinase (adoK).